Here is a 172-residue protein sequence, read N- to C-terminus: uncharacterized protein (172 aa).

A signal peptide spans 1–21 (MMKFKKCLLPVAMLASFTLAG). Cysteine 22 carries the N-palmitoyl cysteine lipid modification. The S-diacylglycerol cysteine moiety is linked to residue cysteine 22.

It is found in the cell membrane. This is an uncharacterized protein from Escherichia coli O157:H7.